The sequence spans 375 residues: MSCPVIELTQQLIRRPSLSPDDAGCQALLIERLQAIGFTVERMDFADTQNFWAWRGQGETLAFAGHTDVVPPGDADRWINPPFEPTIRDGMLFGRGAADMKGSLAAMVVAAERFVAQHPNHTGRLAFLITSDEEASAHNGTVKVVEALMARNERLDYCLVGEPSSIEVVGDVVKNGRRGSLTCNLTIHGVQGHVAYPHLADNPVHRAAPFINELVAIEWDQGNEFFPATSMQIANIQAGTGSNNVIPGELFVQFNFRFSTELTDEMIKAQVLALLEKHQLRYTVDWWLSGQPFLTARGKLVDAVVNAVEHYNEIKPQLLTTGGTSDGRFIARMGAQVVELGPVNATIHKINECVNAADLQLLARMYQRIMEQLVA.

His66 provides a ligand contact to Zn(2+). Asp68 is an active-site residue. A Zn(2+)-binding site is contributed by Asp99. The Proton acceptor role is filled by Glu133. Zn(2+) is bound by residues Glu134, Glu162, and His348.

The protein belongs to the peptidase M20A family. DapE subfamily. As to quaternary structure, homodimer. It depends on Zn(2+) as a cofactor. The cofactor is Co(2+).

The catalysed reaction is N-succinyl-(2S,6S)-2,6-diaminopimelate + H2O = (2S,6S)-2,6-diaminopimelate + succinate. Its pathway is amino-acid biosynthesis; L-lysine biosynthesis via DAP pathway; LL-2,6-diaminopimelate from (S)-tetrahydrodipicolinate (succinylase route): step 3/3. Its function is as follows. Catalyzes the hydrolysis of N-succinyl-L,L-diaminopimelic acid (SDAP), forming succinate and LL-2,6-diaminopimelate (DAP), an intermediate involved in the bacterial biosynthesis of lysine and meso-diaminopimelic acid, an essential component of bacterial cell walls. In Escherichia coli O1:K1 / APEC, this protein is Succinyl-diaminopimelate desuccinylase.